Consider the following 335-residue polypeptide: N-acetyl-gamma-glutamyl-phosphate reductase (335 aa).

Cysteine 156 is a catalytic residue.

Belongs to the NAGSA dehydrogenase family. Type 1 subfamily.

Its subcellular location is the cytoplasm. The enzyme catalyses N-acetyl-L-glutamate 5-semialdehyde + phosphate + NADP(+) = N-acetyl-L-glutamyl 5-phosphate + NADPH + H(+). Its pathway is amino-acid biosynthesis; L-arginine biosynthesis; N(2)-acetyl-L-ornithine from L-glutamate: step 3/4. Functionally, catalyzes the NADPH-dependent reduction of N-acetyl-5-glutamyl phosphate to yield N-acetyl-L-glutamate 5-semialdehyde. This Aeromonas hydrophila subsp. hydrophila (strain ATCC 7966 / DSM 30187 / BCRC 13018 / CCUG 14551 / JCM 1027 / KCTC 2358 / NCIMB 9240 / NCTC 8049) protein is N-acetyl-gamma-glutamyl-phosphate reductase.